We begin with the raw amino-acid sequence, 183 residues long: uncharacterized protein (183 aa).

This sequence belongs to the Bcl-2 family.

This is an uncharacterized protein from Equine herpesvirus 2 (strain 86/87) (EHV-2).